A 226-amino-acid chain; its full sequence is PKHD-type hydroxylase PFL_0865 (226 aa).

The Fe2OG dioxygenase domain occupies 78 to 178 (KVFPPLINCY…RYASFFWTQS (101 aa)). Residues His96, Asp98, and His159 each contribute to the Fe cation site. 2-oxoglutarate is bound at residue Arg169.

It depends on Fe(2+) as a cofactor. L-ascorbate serves as cofactor.

The protein is PKHD-type hydroxylase PFL_0865 of Pseudomonas fluorescens (strain ATCC BAA-477 / NRRL B-23932 / Pf-5).